The following is a 436-amino-acid chain: Glutamyl-tRNA reductase (436 aa).

Residues 50–53 (TCNR), Ser110, 115–117 (ETQ), and Gln121 contribute to the substrate site. The active-site Nucleophile is the Cys51. Residue 190-195 (GLGEMS) participates in NADP(+) binding.

Belongs to the glutamyl-tRNA reductase family. As to quaternary structure, homodimer.

It catalyses the reaction (S)-4-amino-5-oxopentanoate + tRNA(Glu) + NADP(+) = L-glutamyl-tRNA(Glu) + NADPH + H(+). Its pathway is porphyrin-containing compound metabolism; protoporphyrin-IX biosynthesis; 5-aminolevulinate from L-glutamyl-tRNA(Glu): step 1/2. Its function is as follows. Catalyzes the NADPH-dependent reduction of glutamyl-tRNA(Glu) to glutamate 1-semialdehyde (GSA). The polypeptide is Glutamyl-tRNA reductase (Wolinella succinogenes (strain ATCC 29543 / DSM 1740 / CCUG 13145 / JCM 31913 / LMG 7466 / NCTC 11488 / FDC 602W) (Vibrio succinogenes)).